The primary structure comprises 195 residues: Putative NADH dehydrogenase/NAD(P)H nitroreductase RSc1004 (195 aa).

Belongs to the nitroreductase family. HadB/RutE subfamily. FMN is required as a cofactor.

The sequence is that of Putative NADH dehydrogenase/NAD(P)H nitroreductase RSc1004 from Ralstonia nicotianae (strain ATCC BAA-1114 / GMI1000) (Ralstonia solanacearum).